The chain runs to 274 residues: NH(3)-dependent NAD(+) synthetase (274 aa).

G46 to S53 is an ATP binding site. D52 provides a ligand contact to Mg(2+). R140 contacts deamido-NAD(+). An ATP-binding site is contributed by T160. E165 lines the Mg(2+) pocket. Deamido-NAD(+) contacts are provided by K173 and D180. The ATP site is built by K189 and T211. H260–K261 contacts deamido-NAD(+).

Belongs to the NAD synthetase family. Homodimer.

It catalyses the reaction deamido-NAD(+) + NH4(+) + ATP = AMP + diphosphate + NAD(+) + H(+). The protein operates within cofactor biosynthesis; NAD(+) biosynthesis; NAD(+) from deamido-NAD(+) (ammonia route): step 1/1. Its function is as follows. Catalyzes the ATP-dependent amidation of deamido-NAD to form NAD. Uses ammonia as a nitrogen source. In Listeria monocytogenes serotype 4b (strain CLIP80459), this protein is NH(3)-dependent NAD(+) synthetase.